The sequence spans 281 residues: DegV domain-containing protein spr0652 (281 aa).

Positions 3–280 (WKIIADSGCD…EGGLLMGYEI (278 aa)) constitute a DegV domain. The hexadecanoate site is built by serine 63 and serine 91.

Functionally, may bind long-chain fatty acids, such as palmitate, and may play a role in lipid transport or fatty acid metabolism. In Streptococcus pneumoniae (strain ATCC BAA-255 / R6), this protein is DegV domain-containing protein spr0652.